The sequence spans 139 residues: Maximins 4/H3 type 4 (139 aa).

Positions 1 to 18 (MNFKYIIAVSFLIASAYA) are cleaved as a signal peptide. A propeptide spanning residues 19–43 (RSVQNDEQSLSQRDVLEEESLREIR) is cleaved from the precursor. N70 carries the asparagine amide modification. A propeptide spanning residues 74–118 (TAEEHEVMKRLEAVMRDLDSLDHPEEASERETRGFNQDEIAKEKR) is cleaved from the precursor. Isoleucine amide is present on I138.

The protein belongs to the bombinin family. As to expression, expressed by the skin glands.

It localises to the secreted. Maximin-4 shows antibacterial activity against both Gram-positive and Gram-negative bacteria. It also shows antimicrobial activity against the fungus C.albicans, but not against A.flavus nor P.uticale. It has little hemolytic activity. It does not possess a significant cytotoxicity against tumor cell lines. It does not possess a significant anti-HIV activity. Functionally, maximin-H3 shows antibacterial activity against both Gram-positive and Gram-negative bacteria. It also shows antimicrobial activity against the fungus C.albicans. Shows strong hemolytic activity. This chain is Maximins 4/H3 type 4, found in Bombina maxima (Giant fire-bellied toad).